The chain runs to 515 residues: 3,4-dehydroadipyl-CoA semialdehyde dehydrogenase (515 aa).

Active-site residues include Glu-255 and Cys-294. The interval 470–515 (VMPTCLHGGPRARRRRRGVGRSARAGDVSPPLRRAGRPRGAGSPVA) is disordered. The span at 479–488 (PRARRRRRGV) shows a compositional bias: basic residues. Low complexity predominate over residues 489–515 (GRSARAGDVSPPLRRAGRPRGAGSPVA).

The protein belongs to the aldehyde dehydrogenase family. In terms of assembly, homodimer.

It catalyses the reaction (3Z)-6-oxohex-3-enoyl-CoA + NADP(+) + H2O = cis-3,4-dehydroadipyl-CoA + NADPH + 2 H(+). In terms of biological role, catalyzes the NADP-dependent oxidation of 3,4-dehydroadipyl-CoA semialdehyde to form cis-3,4-dehydroadipyl-CoA. This chain is 3,4-dehydroadipyl-CoA semialdehyde dehydrogenase (boxD), found in Aromatoleum evansii (Azoarcus evansii).